The sequence spans 211 residues: C-type lectin domain family 2 member L (211 aa).

Residues 1–53 form a disordered region; sequence MEPAREPPARARPPPPAARPAPAAPRPRSPAEAEARGPEGLLRRSGSGYEGST. The segment covering 10–28 has biased composition (pro residues); it reads RARPPPPAARPAPAAPRPR. A Phosphoserine modification is found at Ser29. A helical transmembrane segment spans residues 66 to 86; that stretch reads LLLGAIAVLLFAILVVMSILA. Cystine bridges form between Cys97-Cys108, Cys125-Cys205, and Cys184-Cys197. In terms of domain architecture, C-type lectin spans 104–206; it reads YGRKCYYFSE…CLTTRPWVCS (103 aa).

It is found in the membrane. This chain is C-type lectin domain family 2 member L (Clec2l), found in Rattus norvegicus (Rat).